A 1017-amino-acid chain; its full sequence is uncharacterized protein (1017 aa).

Residues 1-34 (MGNLTMSRRTFVKTAAITGAAAAAFGASTHTALA) constitute a signal peptide (tat-type signal). One can recognise a 4Fe-4S Mo/W bis-MGD-type domain in the interval 45 to 103 (DTVAVKTCCRGCGKMECGVKVIVQNGRAIRVEGDEGAFQSMGNCCTKSQSSIQAAYHPD). Residues cysteine 53, cysteine 56, cysteine 61, and cysteine 89 each coordinate [4Fe-4S] cluster. Lysine 91 serves as the catalytic Electron donor/acceptor.

Belongs to the prokaryotic molybdopterin-containing oxidoreductase family. [4Fe-4S] cluster is required as a cofactor. Mo-bis(molybdopterin guanine dinucleotide) serves as cofactor. In terms of processing, predicted to be exported by the Tat system. The position of the signal peptide cleavage has not been experimentally proven.

This is an uncharacterized protein from Eggerthella lenta (strain ATCC 25559 / DSM 2243 / CCUG 17323 / JCM 9979 / KCTC 3265 / NCTC 11813 / VPI 0255 / 1899 B) (Eubacterium lentum).